The chain runs to 398 residues: Elongation factor Tu (398 aa).

In terms of domain architecture, tr-type G spans 10 to 207 (KPHVNIGTIG…TVDSYIPEPE (198 aa)). The G1 stretch occupies residues 19-26 (GHVDHGKT). Residue 19–26 (GHVDHGKT) coordinates GTP. Residue Thr26 coordinates Mg(2+). Residues 63–67 (GITIN) form a G2 region. The interval 84 to 87 (DAPG) is G3. GTP-binding positions include 84 to 88 (DAPGH) and 139 to 142 (NKVD). The segment at 139–142 (NKVD) is G4. The tract at residues 177–179 (SAL) is G5.

Belongs to the TRAFAC class translation factor GTPase superfamily. Classic translation factor GTPase family. EF-Tu/EF-1A subfamily. Monomer.

It localises to the cytoplasm. The enzyme catalyses GTP + H2O = GDP + phosphate + H(+). GTP hydrolase that promotes the GTP-dependent binding of aminoacyl-tRNA to the A-site of ribosomes during protein biosynthesis. The protein is Elongation factor Tu of Streptococcus pyogenes serotype M28 (strain MGAS6180).